A 139-amino-acid chain; its full sequence is Nucleoside diphosphate kinase (139 aa).

ATP-binding residues include Lys-11, Phe-59, Arg-87, Thr-93, Arg-104, and Asn-114. The active-site Pros-phosphohistidine intermediate is His-117.

It belongs to the NDK family. In terms of assembly, homotetramer. Requires Mg(2+) as cofactor.

The protein resides in the cytoplasm. The enzyme catalyses a 2'-deoxyribonucleoside 5'-diphosphate + ATP = a 2'-deoxyribonucleoside 5'-triphosphate + ADP. It catalyses the reaction a ribonucleoside 5'-diphosphate + ATP = a ribonucleoside 5'-triphosphate + ADP. Functionally, major role in the synthesis of nucleoside triphosphates other than ATP. The ATP gamma phosphate is transferred to the NDP beta phosphate via a ping-pong mechanism, using a phosphorylated active-site intermediate. The sequence is that of Nucleoside diphosphate kinase from Coxiella burnetii (strain CbuK_Q154) (Coxiella burnetii (strain Q154)).